Here is a 244-residue protein sequence, read N- to C-terminus: ATP synthase subunit a (244 aa).

Transmembrane regions (helical) follow at residues 17–37 (LSNV…AVLT), 74–94 (PFLA…MLGL), 112–132 (DPAI…YYGV), 148–168 (IPLL…TLGL), 171–191 (YGNI…ATNF), 196–216 (IALG…WQAF), and 217–237 (SLFV…VYIS).

Belongs to the ATPase A chain family. F-type ATPases have 2 components, CF(1) - the catalytic core - and CF(0) - the membrane proton channel. CF(1) has five subunits: alpha(3), beta(3), gamma(1), delta(1), epsilon(1). CF(0) has three main subunits: a(1), b(2) and c(9-12). The alpha and beta chains form an alternating ring which encloses part of the gamma chain. CF(1) is attached to CF(0) by a central stalk formed by the gamma and epsilon chains, while a peripheral stalk is formed by the delta and b chains.

The protein localises to the cell membrane. Functionally, key component of the proton channel; it plays a direct role in the translocation of protons across the membrane. This chain is ATP synthase subunit a, found in Bacillus pumilus (strain SAFR-032).